The chain runs to 414 residues: Tryptophan synthase beta chain (414 aa).

The span at 1 to 12 (MVSTISRHDQNK) shows a compositional bias: basic and acidic residues. Residues 1–23 (MVSTISRHDQNKNNDYLNQPSKE) are disordered. Lysine 109 carries the post-translational modification N6-(pyridoxal phosphate)lysine.

Belongs to the TrpB family. As to quaternary structure, tetramer of two alpha and two beta chains. The cofactor is pyridoxal 5'-phosphate.

It carries out the reaction (1S,2R)-1-C-(indol-3-yl)glycerol 3-phosphate + L-serine = D-glyceraldehyde 3-phosphate + L-tryptophan + H2O. It functions in the pathway amino-acid biosynthesis; L-tryptophan biosynthesis; L-tryptophan from chorismate: step 5/5. Its function is as follows. The beta subunit is responsible for the synthesis of L-tryptophan from indole and L-serine. This chain is Tryptophan synthase beta chain, found in Prochlorococcus marinus (strain MIT 9515).